Reading from the N-terminus, the 214-residue chain is Ribosomal RNA small subunit methyltransferase G (214 aa).

S-adenosyl-L-methionine contacts are provided by residues Gly-81, Met-86, 132-133 (VE), and Arg-147.

It belongs to the methyltransferase superfamily. RNA methyltransferase RsmG family.

The protein resides in the cytoplasm. The enzyme catalyses guanosine(527) in 16S rRNA + S-adenosyl-L-methionine = N(7)-methylguanosine(527) in 16S rRNA + S-adenosyl-L-homocysteine. In terms of biological role, specifically methylates the N7 position of guanine in position 527 of 16S rRNA. The sequence is that of Ribosomal RNA small subunit methyltransferase G from Pseudomonas aeruginosa (strain UCBPP-PA14).